Consider the following 510-residue polypeptide: Lysine--tRNA ligase (510 aa).

Positions 420 and 427 each coordinate Mg(2+).

It belongs to the class-II aminoacyl-tRNA synthetase family. Homodimer. Mg(2+) serves as cofactor.

Its subcellular location is the cytoplasm. The catalysed reaction is tRNA(Lys) + L-lysine + ATP = L-lysyl-tRNA(Lys) + AMP + diphosphate. In Clostridium novyi (strain NT), this protein is Lysine--tRNA ligase.